The chain runs to 234 residues: S-adenosylmethionine synthase 1 (234 aa).

ATP is bound by residues 10-12 (DGK), 78-81 (SGRF), D89, 95-96 (RK), A112, K116, and K120. Residue D89 coordinates L-methionine. K120 contributes to the L-methionine binding site.

Belongs to the AdoMet synthase family. As to quaternary structure, homotetramer. The cofactor is Mn(2+). It depends on Mg(2+) as a cofactor. Co(2+) serves as cofactor. K(+) is required as a cofactor. In terms of tissue distribution, mainly in floral buds and roots.

It localises to the cytoplasm. The enzyme catalyses L-methionine + ATP + H2O = S-adenosyl-L-methionine + phosphate + diphosphate. The protein operates within amino-acid biosynthesis; S-adenosyl-L-methionine biosynthesis; S-adenosyl-L-methionine from L-methionine: step 1/1. Catalyzes the formation of S-adenosylmethionine from methionine and ATP. The reaction comprises two steps that are both catalyzed by the same enzyme: formation of S-adenosylmethionine (AdoMet) and triphosphate, and subsequent hydrolysis of the triphosphate. This chain is S-adenosylmethionine synthase 1 (SMS-1), found in Petroselinum crispum (Parsley).